The sequence spans 73 residues: uncharacterized protein (73 aa).

This is an uncharacterized protein from Ureaplasma parvum serovar 3 (strain ATCC 700970).